Reading from the N-terminus, the 176-residue chain is Cytochrome b561 homolog 1 (176 aa).

Residues 1-7 (MNRFSKT) are Cytoplasmic-facing. A helical transmembrane segment spans residues 8–28 (QIYLHWITLLFVAITYAAMEL). Residue His-12 coordinates heme b. Residues 29-45 (RGWFPKGSSTYLLMRET) are Periplasmic-facing. A heme b-binding site is contributed by His-46. Residues 46 to 63 (HYNAGIFVWVLMFSRLII) traverse the membrane as a helical segment. At 64-85 (KHRYSDPSIVPPPPAWQMKAAS) the chain is on the cytoplasmic side. A helical transmembrane segment spans residues 86–106 (LMHIMLYITFLALPLLGIALM). The Periplasmic segment spans residues 107 to 141 (AYSGKSWSFLGFNVSPFVTPNSEIKALIKNIHETW). Heme b is bound by residues His-138 and His-152. The helical transmembrane segment at 142–162 (ANIGYFLIAAHAGAALFHHYI) threads the bilayer. At 163-176 (QKDNTLLRMMPRRK) the chain is on the cytoplasmic side.

This sequence belongs to the cytochrome b561 family. Requires heme b as cofactor.

Its subcellular location is the cell inner membrane. This Escherichia coli (strain K12) protein is Cytochrome b561 homolog 1 (yodB).